We begin with the raw amino-acid sequence, 311 residues long: Olfactory receptor 10G4 (311 aa).

The Extracellular segment spans residues 1–23; sequence MSNASLVTAFILTGLPHAPGLDA. Asn3 carries N-linked (GlcNAc...) asparagine glycosylation. Residues 24 to 44 form a helical membrane-spanning segment; sequence LLFGIFLVVYVLTVLGNLLIL. At 45 to 52 the chain is on the cytoplasmic side; that stretch reads LVIRVDSH. The helical transmembrane segment at 53–73 threads the bilayer; sequence LHTPMYYFLTNLSFIDMWFST. Residues 74 to 98 lie on the Extracellular side of the membrane; the sequence is VTVPKMLMTLVSPSGRAISFHSCVA. Cys96 and Cys188 form a disulfide bridge. The chain crosses the membrane as a helical span at residues 99 to 119; it reads QLYFFHFLGSTECFLYTVMSY. At 120–138 the chain is on the cytoplasmic side; the sequence is DRYLAISYPLRYTSMMSGS. The helical transmembrane segment at 139–159 threads the bilayer; sequence RCALLATGTWLSGSLHSAVQT. The Extracellular portion of the chain corresponds to 160-196; that stretch reads ILTFHLPYCGPNQIQHYFCDAPPILKLACADTSANVM. Residues 197–216 traverse the membrane as a helical segment; it reads VIFVDIGIVASGCFVLIVLS. Residues 217 to 236 are Cytoplasmic-facing; the sequence is YVSIVCSILRIRTSDGRRRA. A helical membrane pass occupies residues 237 to 257; that stretch reads FQTCASHCIVVLCFFVPCVVI. Residues 258 to 268 lie on the Extracellular side of the membrane; sequence YLRPGSMDAMD. Residues 269-289 form a helical membrane-spanning segment; that stretch reads GVVAIFYTVLTPLLNPVVYTL. Residues 290-311 are Cytoplasmic-facing; it reads RNKEVKKAVLKLRDKVAHPQRK.

It belongs to the G-protein coupled receptor 1 family.

The protein resides in the cell membrane. Odorant receptor. The polypeptide is Olfactory receptor 10G4 (OR10G4) (Homo sapiens (Human)).